The following is a 275-amino-acid chain: 2,3,4,5-tetrahydropyridine-2,6-dicarboxylate N-succinyltransferase (275 aa).

Substrate-binding residues include Arg-108 and Asp-145.

It belongs to the transferase hexapeptide repeat family. Homotrimer.

It is found in the cytoplasm. It catalyses the reaction (S)-2,3,4,5-tetrahydrodipicolinate + succinyl-CoA + H2O = (S)-2-succinylamino-6-oxoheptanedioate + CoA. Its pathway is amino-acid biosynthesis; L-lysine biosynthesis via DAP pathway; LL-2,6-diaminopimelate from (S)-tetrahydrodipicolinate (succinylase route): step 1/3. The chain is 2,3,4,5-tetrahydropyridine-2,6-dicarboxylate N-succinyltransferase from Roseobacter denitrificans (strain ATCC 33942 / OCh 114) (Erythrobacter sp. (strain OCh 114)).